The following is a 234-amino-acid chain: Cell polarity protein alp11 (234 aa).

Residues 4–88 enclose the Ubiquitin-like domain; it reads ITLFIKSSSA…IVVEDTRPPH (85 aa). The CAP-Gly domain occupies 174–216; the sequence is VPEINNDNLWVGVEFDEPVGKNDGTVSGKRYFNAKNKHGSFLR. A Phosphoserine modification is found at S213.

This sequence belongs to the TBCB family. Binds to monomeric alpha-tubulin. Interacts with alp21.

Its subcellular location is the cytoplasm. The protein localises to the cytoskeleton. Required for microtubule function and cell polarity. Involved in the proper folding of alpha-tubulin. The polypeptide is Cell polarity protein alp11 (alp11) (Schizosaccharomyces pombe (strain 972 / ATCC 24843) (Fission yeast)).